The following is a 298-amino-acid chain: Mitochondrial nicotinamide adenine dinucleotide transporter SLC25A51 (298 aa).

Basic and acidic residues predominate over residues 1-11; that stretch reads MMDSEAHEKRP. Residues 1 to 21 form a disordered region; it reads MMDSEAHEKRPPMLTSSNQDL. Solcar repeat units follow at residues 28–108, 117–201, and 214–297; these read VGDM…LSRL, PEFA…IKES, and NDFI…LLKI. The next 6 membrane-spanning stretches (helical) occupy residues 36-56, 85-105, 119-139, 180-200, 216-236, and 269-290; these read CGYCAAFNNVAITYPVQKILF, LPPLMQKTTTLALMFGLYEDL, FATRSVAALLAGTTEAILTPF, ILFRNGFGNVLFFGLRGPIKE, FICGGVLGAVLGFLSFPINVV, and LFRGAHLNYHRSLISWGIINAT.

The protein belongs to the mitochondrial carrier (TC 2.A.29) family.

The protein resides in the mitochondrion inner membrane. It catalyses the reaction NAD(+)(in) = NAD(+)(out). In terms of biological role, mitochondrial membrane carrier protein that mediates the import of NAD(+) into mitochondria. Mitochondrial NAD(+) is required for glycolysis and mitochondrial respiration. Compared to SLC25A52, SLC25A51-mediated transport is essential for the import of NAD(+) in mitochondria. The transport mechanism, uniport or antiport, its electrogenicity and substrate selectivity, remain to be elucidated. This is Mitochondrial nicotinamide adenine dinucleotide transporter SLC25A51 from Mus musculus (Mouse).